Reading from the N-terminus, the 517-residue chain is Glucose-6-phosphate isomerase (517 aa).

Glu345 (proton donor) is an active-site residue. Catalysis depends on residues His376 and Lys490.

Belongs to the GPI family.

It is found in the cytoplasm. The catalysed reaction is alpha-D-glucose 6-phosphate = beta-D-fructose 6-phosphate. It functions in the pathway carbohydrate biosynthesis; gluconeogenesis. It participates in carbohydrate degradation; glycolysis; D-glyceraldehyde 3-phosphate and glycerone phosphate from D-glucose: step 2/4. Functionally, catalyzes the reversible isomerization of glucose-6-phosphate to fructose-6-phosphate. The protein is Glucose-6-phosphate isomerase of Erythrobacter litoralis (strain HTCC2594).